The sequence spans 437 residues: Ribulose bisphosphate carboxylase-like protein (437 aa).

K176 acts as the Proton acceptor in catalysis. The Mg(2+) site is built by K202, D204, and E205. At K202 the chain carries N6-carboxylysine. H293 functions as the Proton acceptor in the catalytic mechanism.

The protein belongs to the RuBisCO large chain family. Type IV subfamily. Homodimer. It depends on Mg(2+) as a cofactor.

Functionally, may be involved in sulfur metabolism and oxidative stress response. Does not show RuBisCO activity. This chain is Ribulose bisphosphate carboxylase-like protein, found in Archaeoglobus fulgidus (strain ATCC 49558 / DSM 4304 / JCM 9628 / NBRC 100126 / VC-16).